Consider the following 454-residue polypeptide: Pyrrolysine--tRNA ligase (454 aa).

The tract at residues 102–138 (TRTKKAMPKSVARAPKPLENTEAAQAQPSGSKFSPAI) is disordered. Positions 123–133 (EAAQAQPSGSK) are enriched in polar residues.

This sequence belongs to the class-II aminoacyl-tRNA synthetase family.

It is found in the cytoplasm. It catalyses the reaction tRNA(Pyl) + L-pyrrolysine + ATP = L-pyrrolysyl-tRNA(Pyl) + AMP + diphosphate. Functionally, catalyzes the attachment of pyrrolysine to tRNA(Pyl). Pyrrolysine is a lysine derivative encoded by the termination codon UAG. This is Pyrrolysine--tRNA ligase from Methanosarcina mazei (strain ATCC BAA-159 / DSM 3647 / Goe1 / Go1 / JCM 11833 / OCM 88) (Methanosarcina frisia).